The chain runs to 339 residues: Ketol-acid reductoisomerase (NADP(+)) (339 aa).

The KARI N-terminal Rossmann domain maps to 1–182 (MRVYYDRDAD…GGGRSGIIET (182 aa)). NADP(+) contacts are provided by residues 24–27 (YGSQ), K48, S51, T53, and 83–86 (DELQ). Residue H108 is part of the active site. NADP(+) is bound at residue G134. In terms of domain architecture, KARI C-terminal knotted spans 183–328 (NFKEECETDL…AKLRGMMPWI (146 aa)). Residues D191, E195, E227, and E231 each contribute to the Mg(2+) site. S252 contributes to the substrate binding site.

It belongs to the ketol-acid reductoisomerase family. Mg(2+) is required as a cofactor.

It carries out the reaction (2R)-2,3-dihydroxy-3-methylbutanoate + NADP(+) = (2S)-2-acetolactate + NADPH + H(+). The catalysed reaction is (2R,3R)-2,3-dihydroxy-3-methylpentanoate + NADP(+) = (S)-2-ethyl-2-hydroxy-3-oxobutanoate + NADPH + H(+). It participates in amino-acid biosynthesis; L-isoleucine biosynthesis; L-isoleucine from 2-oxobutanoate: step 2/4. It functions in the pathway amino-acid biosynthesis; L-valine biosynthesis; L-valine from pyruvate: step 2/4. Involved in the biosynthesis of branched-chain amino acids (BCAA). Catalyzes an alkyl-migration followed by a ketol-acid reduction of (S)-2-acetolactate (S2AL) to yield (R)-2,3-dihydroxy-isovalerate. In the isomerase reaction, S2AL is rearranged via a Mg-dependent methyl migration to produce 3-hydroxy-3-methyl-2-ketobutyrate (HMKB). In the reductase reaction, this 2-ketoacid undergoes a metal-dependent reduction by NADPH to yield (R)-2,3-dihydroxy-isovalerate. In Agrobacterium fabrum (strain C58 / ATCC 33970) (Agrobacterium tumefaciens (strain C58)), this protein is Ketol-acid reductoisomerase (NADP(+)).